A 356-amino-acid chain; its full sequence is Transcription elongation factor, mitochondrial (356 aa).

The N-terminal 35 residues, Met1–Lys35, are a transit peptide targeting the mitochondrion.

This sequence belongs to the TEFM family. Interacts with POLRMT.

It localises to the mitochondrion matrix. It is found in the mitochondrion nucleoid. Its function is as follows. Transcription elongation factor which increases mitochondrial RNA polymerase processivity. Regulates transcription of the mitochondrial genome, including genes important for the oxidative phosphorylation machinery. This is Transcription elongation factor, mitochondrial (TEFM) from Bos taurus (Bovine).